The chain runs to 323 residues: tRNA U34 carboxymethyltransferase (323 aa).

Residues lysine 91, tryptophan 105, lysine 110, glycine 130, 152–154 (DPT), 181–182 (IE), methionine 196, tyrosine 200, and arginine 315 contribute to the carboxy-S-adenosyl-L-methionine site.

Belongs to the class I-like SAM-binding methyltransferase superfamily. CmoB family. As to quaternary structure, homotetramer.

The catalysed reaction is carboxy-S-adenosyl-L-methionine + 5-hydroxyuridine(34) in tRNA = 5-carboxymethoxyuridine(34) in tRNA + S-adenosyl-L-homocysteine + H(+). Its function is as follows. Catalyzes carboxymethyl transfer from carboxy-S-adenosyl-L-methionine (Cx-SAM) to 5-hydroxyuridine (ho5U) to form 5-carboxymethoxyuridine (cmo5U) at position 34 in tRNAs. The chain is tRNA U34 carboxymethyltransferase from Shigella boydii serotype 18 (strain CDC 3083-94 / BS512).